The sequence spans 184 residues: ATP synthase subunit b, chloroplastic (184 aa).

Residues 27 to 49 (LATNPINLSVVLGVLIFFGKGVL) form a helical membrane-spanning segment.

Belongs to the ATPase B chain family. In terms of assembly, F-type ATPases have 2 components, F(1) - the catalytic core - and F(0) - the membrane proton channel. F(1) has five subunits: alpha(3), beta(3), gamma(1), delta(1), epsilon(1). F(0) has four main subunits: a(1), b(1), b'(1) and c(10-14). The alpha and beta chains form an alternating ring which encloses part of the gamma chain. F(1) is attached to F(0) by a central stalk formed by the gamma and epsilon chains, while a peripheral stalk is formed by the delta, b and b' chains.

It is found in the plastid. It localises to the chloroplast thylakoid membrane. Functionally, f(1)F(0) ATP synthase produces ATP from ADP in the presence of a proton or sodium gradient. F-type ATPases consist of two structural domains, F(1) containing the extramembraneous catalytic core and F(0) containing the membrane proton channel, linked together by a central stalk and a peripheral stalk. During catalysis, ATP synthesis in the catalytic domain of F(1) is coupled via a rotary mechanism of the central stalk subunits to proton translocation. Its function is as follows. Component of the F(0) channel, it forms part of the peripheral stalk, linking F(1) to F(0). In Chloranthus spicatus (Chulantree), this protein is ATP synthase subunit b, chloroplastic.